Reading from the N-terminus, the 150-residue chain is Ribonuclease pancreatic (150 aa).

Residues 1–26 form the signal peptide; the sequence is MALKSLVLLSLLVLVLLLVRVQPSLG. N-linked (Glc) (glycation) lysine; in vitro glycans are attached at residues K27 and K33. Substrate is bound by residues K33 and R36. The Proton acceptor role is filled by H38. 4 disulfides stabilise this stretch: C52–C110, C66–C121, C84–C136, and C91–C98. Residue N60 is glycosylated (N-linked (GlcNAc...) asparagine; partial). N-linked (Glc) (glycation) lysine; in vitro glycans are attached at residues K63 and K67. Residues 67-71, K92, and R111 contribute to the substrate site; that span reads KPVNT. Catalysis depends on H145, which acts as the Proton donor.

The protein belongs to the pancreatic ribonuclease family. In terms of assembly, interacts with and forms tight 1:1 complexes with RNH1. Dimerization of two such complexes may occur. Interaction with RNH1 inhibits this protein. Monomer. Pancreas.

The protein resides in the secreted. It carries out the reaction an [RNA] containing cytidine + H2O = an [RNA]-3'-cytidine-3'-phosphate + a 5'-hydroxy-ribonucleotide-3'-[RNA].. It catalyses the reaction an [RNA] containing uridine + H2O = an [RNA]-3'-uridine-3'-phosphate + a 5'-hydroxy-ribonucleotide-3'-[RNA].. Endonuclease that catalyzes the cleavage of RNA on the 3' side of pyrimidine nucleotides. Acts on single-stranded and double-stranded RNA. The chain is Ribonuclease pancreatic (RNASE1) from Bos taurus (Bovine).